A 110-amino-acid chain; its full sequence is UPF0060 membrane protein BPSL1340 (110 aa).

4 helical membrane-spanning segments follow: residues 9 to 29, 34 to 54, 64 to 84, and 86 to 106; these read ALFV…WLVL, PAWL…LLTL, AAYG…VDGV, and LSRW…VIAL.

Belongs to the UPF0060 family.

The protein localises to the cell inner membrane. The polypeptide is UPF0060 membrane protein BPSL1340 (Burkholderia pseudomallei (strain K96243)).